A 213-amino-acid chain; its full sequence is uncharacterized protein (213 aa).

Residues Ser2–Val91 enclose the CS domain. Positions Gly168–Ser213 are disordered. The segment covering Asp176–Glu187 has biased composition (acidic residues). Residues Val188–Ser213 are compositionally biased toward basic and acidic residues.

Belongs to the p23/wos2 family.

This is an uncharacterized protein from Oryza sativa subsp. japonica (Rice).